The following is a 299-amino-acid chain: MMCFLLIILSILVVFAFVLGNFSNGFIALVNVIDWVNTRKISSADQILTALVVSRIGLLWVMLFLWYATVFNSALYGLEVRIVASNAWAVMNHFSIWLAASLSIFCLLKIANFSNLIFLHLKKRIKSVVLVILLGPLVFLICNLAVITMDERVWTKEYEGNVTWKIKLRNAIQLSSLTVTTLANLIPFTLSLICFLLLICSLCKHLKKMRLHSKGSQDPSTKVHIKALQTVTSFLMLFAIYFLCIITSTWNLRTQQSKLVLLLCQTVAIMYPSFHSFILIMGSRKLKQTFLSVLWQMTR.

Methionine 1 is a topological domain (extracellular). A helical membrane pass occupies residues 2-22 (MCFLLIILSILVVFAFVLGNF). Topologically, residues 23 to 55 (SNGFIALVNVIDWVNTRKISSADQILTALVVSR) are cytoplasmic. The helical transmembrane segment at 56–76 (IGLLWVMLFLWYATVFNSALY) threads the bilayer. Residues 77–87 (GLEVRIVASNA) lie on the Extracellular side of the membrane. A helical transmembrane segment spans residues 88–108 (WAVMNHFSIWLAASLSIFCLL). Over 109-127 (KIANFSNLIFLHLKKRIKS) the chain is Cytoplasmic. Residues 128-148 (VVLVILLGPLVFLICNLAVIT) traverse the membrane as a helical segment. Topologically, residues 149 to 181 (MDERVWTKEYEGNVTWKIKLRNAIQLSSLTVTT) are extracellular. A glycan (N-linked (GlcNAc...) asparagine) is linked at asparagine 161. The chain crosses the membrane as a helical span at residues 182–202 (LANLIPFTLSLICFLLLICSL). At 203-226 (CKHLKKMRLHSKGSQDPSTKVHIK) the chain is on the cytoplasmic side. Residues 227 to 247 (ALQTVTSFLMLFAIYFLCIIT) form a helical membrane-spanning segment. Residues 248–259 (STWNLRTQQSKL) lie on the Extracellular side of the membrane. The chain crosses the membrane as a helical span at residues 260–280 (VLLLCQTVAIMYPSFHSFILI). Residues 281 to 299 (MGSRKLKQTFLSVLWQMTR) lie on the Cytoplasmic side of the membrane.

Belongs to the G-protein coupled receptor T2R family.

It localises to the membrane. Its function is as follows. Receptor that may play a role in the perception of bitterness and is gustducin-linked. May play a role in sensing the chemical composition of the gastrointestinal content. The activity of this receptor may stimulate alpha gustducin, mediate PLC-beta-2 activation and lead to the gating of TRPM5. This chain is Taste receptor type 2 member 19 (TAS2R19), found in Pan paniscus (Pygmy chimpanzee).